A 266-amino-acid polypeptide reads, in one-letter code: Apolipoprotein A-I (266 aa).

An N-terminal signal peptide occupies residues 1 to 18 (MKAVVLTLAVLFLTGSQA). Repeat copies occupy residues 67 to 88 (LKLL…EQIG) and 89 to 110 (PVTQ…QEMN). A 10 X approximate tandem repeats region spans residues 67–266 (LKLLDNWDTL…DEATKKLNAQ (200 aa)). Met109 carries the methionine sulfoxide modification. Residues 111-121 (KDLEEVKKKVQ) form a 3; half-length repeat. 5 tandem repeats follow at residues 122-143 (PYLD…QKVA), 144-165 (PLGA…EKLS), 166-187 (PLGE…AQLA), 188-209 (PYSD…EGGG), and 210-231 (AALA…EKAK). The stretch at 232–242 (PALEDLRQGLL) is one 9; half-length repeat. Repeat unit 10 spans residues 243–266 (PVLESFRTSLLAAVDEATKKLNAQ).

Belongs to the apolipoprotein A1/A4/E family. As to quaternary structure, homodimer. Interacts with APOA1BP and CLU. Component of a sperm activating protein complex (SPAP), consisting of APOA1, an immunoglobulin heavy chain, an immunoglobulin light chain and albumin. Interacts with NDRG1. Interacts with SCGB3A2. Interacts with NAXE and YJEFN3. Glycosylated. In terms of processing, palmitoylated. Post-translationally, phosphorylation sites are present in the extracellular medium.

It is found in the secreted. In terms of biological role, participates in the reverse transport of cholesterol from tissues to the liver for excretion by promoting cholesterol efflux from tissues and by acting as a cofactor for the lecithin cholesterol acyltransferase (LCAT). As part of the SPAP complex, activates spermatozoa motility. In Odobenus rosmarus divergens (Pacific walrus), this protein is Apolipoprotein A-I (APOA1).